A 440-amino-acid polypeptide reads, in one-letter code: (S)-N-methylcoclaurine 3'-hydroxylase-like protein (440 aa).

Residues 2–21 traverse the membrane as a helical; Signal-anchor for type II membrane protein segment; that stretch reads EIVTVALIAIVFTTFLYLIV. C430 is a heme binding site.

The protein belongs to the cytochrome P450 family. Heme serves as cofactor.

The protein resides in the membrane. Functionally, involved in the biosynthesis of benzylisoquinoline alkaloids. Probably involved in papaverine biosynthesis since its transcripts are abundant only in cultivars with substantial papaverine accumulation. May catalyze the 3'-hydroxylation of (S)-coclaurine. This is (S)-N-methylcoclaurine 3'-hydroxylase-like protein from Papaver somniferum (Opium poppy).